A 326-amino-acid chain; its full sequence is 4-hydroxy-3-methylbut-2-enyl diphosphate reductase (326 aa).

Cys-22 contacts [4Fe-4S] cluster. Residues His-51 and His-84 each contribute to the (2E)-4-hydroxy-3-methylbut-2-enyl diphosphate site. Dimethylallyl diphosphate-binding residues include His-51 and His-84. Residues His-51 and His-84 each contribute to the isopentenyl diphosphate site. Residue Cys-106 coordinates [4Fe-4S] cluster. Position 134 (His-134) interacts with (2E)-4-hydroxy-3-methylbut-2-enyl diphosphate. His-134 lines the dimethylallyl diphosphate pocket. Isopentenyl diphosphate is bound at residue His-134. Glu-136 acts as the Proton donor in catalysis. Thr-174 lines the (2E)-4-hydroxy-3-methylbut-2-enyl diphosphate pocket. Residue Cys-204 participates in [4Fe-4S] cluster binding. Ser-232, Ser-233, Asn-234, and Ser-276 together coordinate (2E)-4-hydroxy-3-methylbut-2-enyl diphosphate. Dimethylallyl diphosphate is bound by residues Ser-232, Ser-233, Asn-234, and Ser-276. Isopentenyl diphosphate contacts are provided by Ser-232, Ser-233, Asn-234, and Ser-276.

The protein belongs to the IspH family. It depends on [4Fe-4S] cluster as a cofactor.

It carries out the reaction isopentenyl diphosphate + 2 oxidized [2Fe-2S]-[ferredoxin] + H2O = (2E)-4-hydroxy-3-methylbut-2-enyl diphosphate + 2 reduced [2Fe-2S]-[ferredoxin] + 2 H(+). It catalyses the reaction dimethylallyl diphosphate + 2 oxidized [2Fe-2S]-[ferredoxin] + H2O = (2E)-4-hydroxy-3-methylbut-2-enyl diphosphate + 2 reduced [2Fe-2S]-[ferredoxin] + 2 H(+). Its pathway is isoprenoid biosynthesis; dimethylallyl diphosphate biosynthesis; dimethylallyl diphosphate from (2E)-4-hydroxy-3-methylbutenyl diphosphate: step 1/1. The protein operates within isoprenoid biosynthesis; isopentenyl diphosphate biosynthesis via DXP pathway; isopentenyl diphosphate from 1-deoxy-D-xylulose 5-phosphate: step 6/6. Functionally, catalyzes the conversion of 1-hydroxy-2-methyl-2-(E)-butenyl 4-diphosphate (HMBPP) into a mixture of isopentenyl diphosphate (IPP) and dimethylallyl diphosphate (DMAPP). Acts in the terminal step of the DOXP/MEP pathway for isoprenoid precursor biosynthesis. In Bordetella parapertussis (strain 12822 / ATCC BAA-587 / NCTC 13253), this protein is 4-hydroxy-3-methylbut-2-enyl diphosphate reductase.